The primary structure comprises 159 residues: Ribosomal RNA large subunit methyltransferase H (159 aa).

S-adenosyl-L-methionine-binding positions include Leu-76, Gly-108, and 127–132 (FSKMTF).

This sequence belongs to the RNA methyltransferase RlmH family. Homodimer.

The protein resides in the cytoplasm. The catalysed reaction is pseudouridine(1915) in 23S rRNA + S-adenosyl-L-methionine = N(3)-methylpseudouridine(1915) in 23S rRNA + S-adenosyl-L-homocysteine + H(+). In terms of biological role, specifically methylates the pseudouridine at position 1915 (m3Psi1915) in 23S rRNA. The sequence is that of Ribosomal RNA large subunit methyltransferase H from Bifidobacterium longum subsp. infantis (strain ATCC 15697 / DSM 20088 / JCM 1222 / NCTC 11817 / S12).